Here is a 603-residue protein sequence, read N- to C-terminus: Phosphomethylpyrimidine synthase (603 aa).

Substrate-binding positions include Asn224, Met253, Tyr282, His318, 338–340 (SRG), 379–382 (DGLR), and Glu418. His422 contacts Zn(2+). Tyr445 provides a ligand contact to substrate. His486 is a Zn(2+) binding site. [4Fe-4S] cluster is bound by residues Cys566, Cys569, and Cys574.

This sequence belongs to the ThiC family. In terms of assembly, homodimer. The cofactor is [4Fe-4S] cluster.

It catalyses the reaction 5-amino-1-(5-phospho-beta-D-ribosyl)imidazole + S-adenosyl-L-methionine = 4-amino-2-methyl-5-(phosphooxymethyl)pyrimidine + CO + 5'-deoxyadenosine + formate + L-methionine + 3 H(+). Its pathway is cofactor biosynthesis; thiamine diphosphate biosynthesis. In terms of biological role, catalyzes the synthesis of the hydroxymethylpyrimidine phosphate (HMP-P) moiety of thiamine from aminoimidazole ribotide (AIR) in a radical S-adenosyl-L-methionine (SAM)-dependent reaction. This chain is Phosphomethylpyrimidine synthase, found in Xylella fastidiosa (strain Temecula1 / ATCC 700964).